A 162-amino-acid polypeptide reads, in one-letter code: uncharacterized protein (162 aa).

The first 19 residues, 1 to 19, serve as a signal peptide directing secretion; the sequence is MARVYILFFSVFFVFPLFS. 2 helical membrane-spanning segments follow: residues 53 to 75 and 105 to 127; these read LSIG…IRLI and IVFG…YRAV.

It localises to the cell membrane. This is an uncharacterized protein from Treponema pallidum (strain Nichols).